The chain runs to 292 residues: NAD kinase (292 aa).

Aspartate 72 functions as the Proton acceptor in the catalytic mechanism. NAD(+) contacts are provided by residues 72-73, 146-147, histidine 157, arginine 174, aspartate 176, and 187-192; these read DG, NE, and TAYALS.

It belongs to the NAD kinase family. A divalent metal cation serves as cofactor.

The protein resides in the cytoplasm. The catalysed reaction is NAD(+) + ATP = ADP + NADP(+) + H(+). Its function is as follows. Involved in the regulation of the intracellular balance of NAD and NADP, and is a key enzyme in the biosynthesis of NADP. Catalyzes specifically the phosphorylation on 2'-hydroxyl of the adenosine moiety of NAD to yield NADP. The chain is NAD kinase from Shewanella oneidensis (strain ATCC 700550 / JCM 31522 / CIP 106686 / LMG 19005 / NCIMB 14063 / MR-1).